The following is a 447-amino-acid chain: Argininosuccinate synthase (447 aa).

Residues 20-28 (AFSGGLDTS) and Ala-46 contribute to the ATP site. Position 102 (Tyr-102) interacts with L-citrulline. Positions 132 and 134 each coordinate ATP. The L-aspartate site is built by Thr-134, Asn-138, and Asp-139. An L-citrulline-binding site is contributed by Asn-138. Residue Asp-139 coordinates ATP. Arg-142 and Ser-195 together coordinate L-citrulline. Asp-197 lines the ATP pocket. The L-citrulline site is built by Thr-204, Glu-206, and Glu-283.

This sequence belongs to the argininosuccinate synthase family. Type 2 subfamily. As to quaternary structure, homotetramer.

It localises to the cytoplasm. The enzyme catalyses L-citrulline + L-aspartate + ATP = 2-(N(omega)-L-arginino)succinate + AMP + diphosphate + H(+). It participates in amino-acid biosynthesis; L-arginine biosynthesis; L-arginine from L-ornithine and carbamoyl phosphate: step 2/3. This chain is Argininosuccinate synthase, found in Neisseria meningitidis serogroup C / serotype 2a (strain ATCC 700532 / DSM 15464 / FAM18).